The following is a 66-amino-acid chain: Conotoxin Cl14.1b (66 aa).

A signal peptide spans 1 to 19 (MNVTVMFLVLLLTMPLTDG). The propeptide occupies 20–47 (FNIRAINGGELFGLVQRDAGNALDHGFY).

Belongs to the conotoxin L superfamily. Post-translationally, contains 2 disulfide bonds. Expressed by the venom duct.

The protein resides in the secreted. This Californiconus californicus (California cone) protein is Conotoxin Cl14.1b.